Here is a 116-residue protein sequence, read N- to C-terminus: DNA-directed RNA polymerase subunit omega (116 aa).

Belongs to the RNA polymerase subunit omega family. In terms of assembly, the RNAP catalytic core consists of 2 alpha, 1 beta, 1 beta' and 1 omega subunit. When a sigma factor is associated with the core the holoenzyme is formed, which can initiate transcription.

The enzyme catalyses RNA(n) + a ribonucleoside 5'-triphosphate = RNA(n+1) + diphosphate. In terms of biological role, promotes RNA polymerase assembly. Latches the N- and C-terminal regions of the beta' subunit thereby facilitating its interaction with the beta and alpha subunits. This Hyphomonas neptunium (strain ATCC 15444) protein is DNA-directed RNA polymerase subunit omega.